A 293-amino-acid polypeptide reads, in one-letter code: Bis(5'-nucleosyl)-tetraphosphatase, symmetrical (293 aa).

Belongs to the Ap4A hydrolase family.

It carries out the reaction P(1),P(4)-bis(5'-adenosyl) tetraphosphate + H2O = 2 ADP + 2 H(+). Its function is as follows. Hydrolyzes diadenosine 5',5'''-P1,P4-tetraphosphate to yield ADP. This chain is Bis(5'-nucleosyl)-tetraphosphatase, symmetrical, found in Pseudomonas fluorescens (strain Pf0-1).